A 192-amino-acid chain; its full sequence is Sporulation initiation phosphotransferase B (192 aa).

Phosphohistidine is present on His30.

As to quaternary structure, homodimer. Dimerization is essential for activity as both monomers contribute to the formation of the active site. Post-translationally, phosphorylated by spo0F.

It is found in the cytoplasm. Its function is as follows. Key element in the phosphorelay regulating sporulation initiation. Acts on spo0A. Mediates reversible phosphoryl transfer from spo0F to spo0A. In Bacillus subtilis (strain 168), this protein is Sporulation initiation phosphotransferase B (spo0B).